The primary structure comprises 390 residues: Neuromedin-B receptor (390 aa).

Positions 1–19 (MPSKSLSNLSVTTGANESG) are enriched in polar residues. The tract at residues 1–22 (MPSKSLSNLSVTTGANESGSVP) is disordered. At 1 to 41 (MPSKSLSNLSVTTGANESGSVPEGWERDFLPASDGTTTELV) the chain is on the extracellular side. 2 N-linked (GlcNAc...) asparagine glycosylation sites follow: asparagine 8 and asparagine 16. The helical transmembrane segment at 42–65 (IRCVIPSLYLLIITVGLLGNIMLV) threads the bilayer. At 66 to 79 (KIFITNSAMRSVPN) the chain is on the cytoplasmic side. Residues 80–99 (IFISNLAAGDLLLLLTCVPV) form a helical membrane-spanning segment. Residues 100 to 117 (DASRYFFDEWMFGKVGCK) lie on the Extracellular side of the membrane. An intrachain disulfide couples cysteine 116 to cysteine 198. A helical transmembrane segment spans residues 118–139 (LIPVIQLTSVGVSVFTLTALSA). Over 140–156 (DRYRAIVNPMDMQTSGA) the chain is Cytoplasmic. A helical membrane pass occupies residues 157 to 177 (LLRTCVKAMGIWVVSVLLAVP). Residues 178 to 211 (EAVFSEVARISSLDNSSFTACIPYPQTDELHPKI) are Extracellular-facing. An N-linked (GlcNAc...) asparagine glycan is attached at asparagine 192. The chain crosses the membrane as a helical span at residues 212-235 (HSVLIFLVYFLIPLAIISIYYYHI). At 236-266 (AKTLIKSAHNLPGEYNEHTKKQMETRKRLAK) the chain is on the cytoplasmic side. The helical transmembrane segment at 267–287 (IVLVFVGCFIFCWFPNHILYM) threads the bilayer. Residues 288-299 (YRSFNYNEIDPS) are Extracellular-facing. The chain crosses the membrane as a helical span at residues 300-327 (LGHMIVTLVARVLSFGNSCVNPFALYLL). Residues 328–390 (SESFRRHFNS…GHSMKQEMAL (63 aa)) lie on the Cytoplasmic side of the membrane. Cysteine 341 carries S-palmitoyl cysteine lipidation. At serine 352 the chain carries Phosphoserine.

The protein belongs to the G-protein coupled receptor 1 family. As to expression, expressed in epididymis (at protein level).

The protein localises to the cell membrane. Functionally, receptor for neuromedin-B. Contributes to the maintenance of basal sigh rate through signaling in the pre-Botzinger complex, a cluster of several thousand neurons in the ventrolateral medulla responsible for inspiration during respiratory activity. Contributes to the induction of sneezing following exposure to chemical irritants or allergens which causes release of NMB by nasal sensory neurons and activation of NMBR-expressing neurons in the sneeze-evoking region of the brainstem. These in turn activate neurons of the caudal ventral respiratory group, giving rise to the sneezing response. Contributes to induction of acute itch, possibly through its activation on dorsal root ganglion neurons by the NMB peptide. Plays a role in the innate immune response to influenza A virus infection by enhancing interferon alpha expression and reducing expression of IL6. Plays a role in CSF1-induced proliferation of osteoclast precursors by contributing to the positive regulation of the expression of the CSF1 receptor CSF1R. In Homo sapiens (Human), this protein is Neuromedin-B receptor (NMBR).